Consider the following 277-residue polypeptide: Coiled-coil domain-containing protein 117 (277 aa).

The interval 1–69 is disordered; that stretch reads MAALGRPFSG…GRVSIHCRKK (69 aa). Over residues 26-37 the composition is skewed to low complexity; the sequence is FAGRAFPPGAAG. Arg-47 is modified (omega-N-methylarginine). Ser-52 bears the Phosphoserine mark. The span at 58–69 shows a compositional bias: basic residues; sequence ARGRVSIHCRKK. Residues 139–166 are a coiled coil; sequence QCEVARRRLQEIEDRIIDEDEEVESDRN. The tract at residues 212–277 is disordered; sequence LPELLPEKPK…ATSTEEEMEL (66 aa).

As to quaternary structure, interacts with CIAO2B; the interaction is direct. Interacts with MMS19; the interaction is indirect.

The protein resides in the cytoplasm. It is found in the cytoskeleton. The protein localises to the spindle. It localises to the nucleus. Functionally, facilitates DNA repair, cell cycle progression, and cell proliferation through its interaction with CIAO2B. The polypeptide is Coiled-coil domain-containing protein 117 (Mus musculus (Mouse)).